Consider the following 333-residue polypeptide: Alpha-N-acetylgalactosaminide alpha-2,6-sialyltransferase 6 (333 aa).

A compositionally biased stretch (polar residues) spans 1 to 12; that stretch reads MACSRPPSQCDP. The interval 1-27 is disordered; it reads MACSRPPSQCDPTTLPPGPPAGRWPLP. Residues 1-43 are Cytoplasmic-facing; that stretch reads MACSRPPSQCDPTTLPPGPPAGRWPLPFSRRRREMSSNKEQRS. Residues 44-64 traverse the membrane as a helical; Signal-anchor for type II membrane protein segment; sequence AVFVILFALITILILYSSNSA. The Lumenal segment spans residues 65 to 333; it reads NEVFHYGSLR…GITFSHPSWT (269 aa). N-linked (GlcNAc...) asparagine glycosylation occurs at asparagine 98. A disulfide bridge links cysteine 108 with cysteine 256.

The protein belongs to the glycosyltransferase 29 family. As to expression, widely expressed, the gene expression is most abundant in colon, brain, liver, and heart.

It is found in the golgi apparatus membrane. The enzyme catalyses a ganglioside GM1b (d18:1(4E)) + CMP-N-acetyl-beta-neuraminate = a ganglioside GD1alpha (d18:1(4E)) + CMP + H(+). It catalyses the reaction a ganglioside GD1a (d18:1(4E)) + CMP-N-acetyl-beta-neuraminate = a ganglioside GT1aalpha (d18:1(4E)) + CMP + H(+). The catalysed reaction is a ganglioside GT1b (d18:1(4E)) + CMP-N-acetyl-beta-neuraminate = a ganglioside GQ1balpha (d18:1(4E)) + CMP + H(+). It carries out the reaction N-acetyl-alpha-neuraminosyl-(2-&gt;3)-beta-D-galactosyl-(1-&gt;3)-N-acetyl-beta-D-glucosaminyl-(1-&gt;3)-beta-D-galactosyl-(1-&gt;4)-beta-D-glucosyl-(1&lt;-&gt;1')-N-acyl-sphing-4-enine + CMP-N-acetyl-beta-neuraminate = N-acetyl-alpha-neuraminosyl-(2-&gt;3)-beta-D-galactosyl-(1-&gt;3)-[N-acetyl-alpha-neuraminosyl-(2-&gt;6)]-N-acetyl-beta-D-glucosaminyl-(1-&gt;3)-beta-D-galactosyl-(1-&gt;4)-beta-D-glucosyl-(1&lt;-&gt;1')-N-acyl-sphing-4-enine + CMP + H(+). The enzyme catalyses a globoside MSGG + CMP-N-acetyl-beta-neuraminate = a globoside DSGG + CMP + H(+). It catalyses the reaction 3-O-[alpha-Neu5Ac-(2-&gt;3)-beta-D-Gal-(1-&gt;3)-alpha-D-GalNAc]-L-Ser-[protein] + CMP-N-acetyl-beta-neuraminate = a 3-O-{alpha-Neu5Ac-(2-&gt;3)-beta-D-Gal-(1-&gt;3)-[alpha-Neu5Ac-(2-&gt;6)]-alpha-D-GalNAc}-L-seryl-[protein] + CMP + H(+). The catalysed reaction is 3-O-[alpha-Neu5Ac-(2-&gt;3)-beta-D-Gal-(1-&gt;3)-alpha-D-GalNAc]-L-Thr-[protein] + CMP-N-acetyl-beta-neuraminate = a 3-O-{alpha-Neu5Ac-(2-&gt;3)-beta-D-Gal-(1-&gt;3)-[alpha-Neu5Ac-(2-&gt;6)]-alpha-D-GalNAc}-L-threonyl-[protein] + CMP + H(+). In terms of biological role, transfers the sialyl group (N-acetyl-alpha-neuraminyl or NeuAc) from CMP-NeuAc onto glycolipids, forming an alpha-2,6-linkage. Produces branched type disialyl structures by transfer of a sialyl group onto the GalNAc or GlcNAc residue inside backbone core chains having a terminal sialic acid with an alpha-2,3-linkage on Gal. ST6GalNAcVI prefers glycolipids to glycoproteins, predominantly catalyzing the biosynthesis of ganglioside GD1alpha from GM1b. Also has activity toward GD1a and GT1b, and can generate DSGG (disialylgalactosylgloboside) from MSGG (monosialylgalactosylgloboside). Besides GMb1, MSGG and other glycolipids, it shows activity towards sialyl Lc4Cer generating disialyl Lc4Cer, which can lead to the synthesis of disialyl Lewis a (Le(a)), suggested to be a cancer-associated antigen. The sequence is that of Alpha-N-acetylgalactosaminide alpha-2,6-sialyltransferase 6 (St6galnac6) from Mus musculus (Mouse).